The chain runs to 277 residues: Ribosome-inactivating protein luffin-alpha (277 aa).

Positions 1–19 (MKRFTVLILAIFVAASTVE) are cleaved as a signal peptide. The active site involves Glu-179.

Belongs to the ribosome-inactivating protein family. Type 1 RIP subfamily.

The enzyme catalyses Endohydrolysis of the N-glycosidic bond at one specific adenosine on the 28S rRNA.. In Luffa aegyptiaca (Sponge gourd), this protein is Ribosome-inactivating protein luffin-alpha.